We begin with the raw amino-acid sequence, 124 residues long: Fluoride-specific ion channel FluC (124 aa).

3 helical membrane-spanning segments follow: residues leucine 20–valine 40, isoleucine 60–serine 80, and valine 102–serine 122. Na(+)-binding residues include glycine 74 and threonine 77.

Belongs to the fluoride channel Fluc/FEX (TC 1.A.43) family.

The protein localises to the cell inner membrane. The enzyme catalyses fluoride(in) = fluoride(out). With respect to regulation, na(+) is not transported, but it plays an essential structural role and its presence is essential for fluoride channel function. Functionally, fluoride-specific ion channel. Important for reducing fluoride concentration in the cell, thus reducing its toxicity. The protein is Fluoride-specific ion channel FluC of Shewanella frigidimarina (strain NCIMB 400).